The primary structure comprises 255 residues: Large ribosomal subunit protein uL6m (255 aa).

The interval 39 to 61 (AARRNFSATTTRPSKLGRTPLSI) is disordered.

It belongs to the universal ribosomal protein uL6 family. In terms of assembly, component of the mitochondrial large ribosomal subunit (mt-LSU). Mature N.crassa 74S mitochondrial ribosomes consist of a small (37S) and a large (54S) subunit. The 37S small subunit contains a 16S ribosomal RNA (16S mt-rRNA) and 32 different proteins. The 54S large subunit contains a 23S rRNA (23S mt-rRNA) and 42 different proteins.

It localises to the mitochondrion. Its function is as follows. Component of the mitochondrial ribosome (mitoribosome), a dedicated translation machinery responsible for the synthesis of mitochondrial genome-encoded proteins, including at least some of the essential transmembrane subunits of the mitochondrial respiratory chain. The mitoribosomes are attached to the mitochondrial inner membrane and translation products are cotranslationally integrated into the membrane. The protein is Large ribosomal subunit protein uL6m (mrpl6) of Neurospora crassa (strain ATCC 24698 / 74-OR23-1A / CBS 708.71 / DSM 1257 / FGSC 987).